The chain runs to 962 residues: Protease 3 (962 aa).

Residues 1–23 (MPRSIWFKALLLFVALWAPLSQA) form the signal peptide. His88 is a binding site for Zn(2+). The active-site Proton acceptor is Glu91. Zn(2+) is bound by residues His92 and Glu169.

The protein belongs to the peptidase M16 family. In terms of assembly, monomer. It depends on Zn(2+) as a cofactor.

It localises to the periplasm. The enzyme catalyses Preferential cleavage of 16-Tyr-|-Leu-17 and 25-Phe-|-Tyr-26 bonds of oxidized insulin B chain. Also acts on other substrates of Mw less than 7 kDa such as insulin and glucagon.. Its function is as follows. Endopeptidase that degrades small peptides of less than 7 kDa, such as glucagon and insulin. The protein is Protease 3 (ptrA) of Escherichia coli O6:H1 (strain CFT073 / ATCC 700928 / UPEC).